The chain runs to 347 residues: MIKEYYGAETFILNKDFAYILVIGTTDVSLIPGLTIAGATPELTHFTPAADAEYVLLGKCKSINTIPVSPTGIPTPALLTRASLSFINPLKIVVNAGSRIVPKIPYIDLQGEPGKDIRKQALSMEKVNNIIENSIKLGEELSNEYELIMIGESIPAGTTTAMATLLALGYDAMDKVSSASPDNPKELKRKVVEEALRNLPTDPLQRLAKVSDPVLLGVAGTSLGFKGKILLAGGTQMTAAAAIINEFDKNKLKDITIGTTKWIVEDKFADMLSLAKQVGVKVLASMLDLSISAYEGIRAYEKGYVKEGVGAGGSAIMALVKGVSNNTLVRKIDELYGELVGSSNLHI.

It belongs to the UPF0284 family.

This chain is UPF0284 protein M1627_0030, found in Saccharolobus islandicus (strain M.16.27) (Sulfolobus islandicus).